A 125-amino-acid polypeptide reads, in one-letter code: uncharacterized protein (125 aa).

Residues 21–43 (KFSLIALVSFTALAIIVLYHNIS) traverse the membrane as a helical segment.

The protein resides in the membrane. This is an uncharacterized protein from Archaeoglobus fulgidus (strain ATCC 49558 / DSM 4304 / JCM 9628 / NBRC 100126 / VC-16).